Reading from the N-terminus, the 436-residue chain is Adenosylhomocysteinase (436 aa).

Residues Thr62, Asp136, and Glu161 each coordinate substrate. 162-164 contacts NAD(+); sequence TTT. Substrate is bound by residues Lys191 and Asp195. NAD(+) contacts are provided by residues Asn196, 225–230, Glu248, Asn283, 304–306, and Asn352; these read GFGDVG and IGH.

It belongs to the adenosylhomocysteinase family. It depends on NAD(+) as a cofactor.

Its subcellular location is the cytoplasm. It carries out the reaction S-adenosyl-L-homocysteine + H2O = L-homocysteine + adenosine. The protein operates within amino-acid biosynthesis; L-homocysteine biosynthesis; L-homocysteine from S-adenosyl-L-homocysteine: step 1/1. Its function is as follows. May play a key role in the regulation of the intracellular concentration of adenosylhomocysteine. The polypeptide is Adenosylhomocysteinase (Leptospira interrogans serogroup Icterohaemorrhagiae serovar copenhageni (strain Fiocruz L1-130)).